The chain runs to 466 residues: Amidase (466 aa).

Catalysis depends on charge relay system residues K79 and S148. The tract at residues 128-152 (YGRITPKSRNPRDPGRTPGGSSGGS) is disordered. The active-site Acyl-ester intermediate is the S172.

It belongs to the amidase family.

It catalyses the reaction a monocarboxylic acid amide + H2O = a monocarboxylate + NH4(+). The protein is Amidase of Pseudomonas putida (Arthrobacter siderocapsulatus).